A 396-amino-acid chain; its full sequence is Tryptophan synthase beta chain (396 aa).

The residue at position 86 (Lys86) is an N6-(pyridoxal phosphate)lysine.

The protein belongs to the TrpB family. Tetramer of two alpha and two beta chains. It depends on pyridoxal 5'-phosphate as a cofactor.

It carries out the reaction (1S,2R)-1-C-(indol-3-yl)glycerol 3-phosphate + L-serine = D-glyceraldehyde 3-phosphate + L-tryptophan + H2O. It functions in the pathway amino-acid biosynthesis; L-tryptophan biosynthesis; L-tryptophan from chorismate: step 5/5. Its function is as follows. The beta subunit is responsible for the synthesis of L-tryptophan from indole and L-serine. This is Tryptophan synthase beta chain from Erwinia tasmaniensis (strain DSM 17950 / CFBP 7177 / CIP 109463 / NCPPB 4357 / Et1/99).